A 119-amino-acid chain; its full sequence is MVKLSFPRELRLLTPNHFNFVFQQPQRAGTPQLTILGRMNSLGYPRIGLTVAKKHVKRAHERNRIKRLTRESFRLRQHSLPAMDFVVIVKKGVQELDNRALTEMLEKLWRRHCRQARAS.

It belongs to the RnpA family. As to quaternary structure, consists of a catalytic RNA component (M1 or rnpB) and a protein subunit.

It carries out the reaction Endonucleolytic cleavage of RNA, removing 5'-extranucleotides from tRNA precursor.. Its function is as follows. RNaseP catalyzes the removal of the 5'-leader sequence from pre-tRNA to produce the mature 5'-terminus. It can also cleave other RNA substrates such as 4.5S RNA. The protein component plays an auxiliary but essential role in vivo by binding to the 5'-leader sequence and broadening the substrate specificity of the ribozyme. In Edwardsiella ictaluri (strain 93-146), this protein is Ribonuclease P protein component.